Here is a 52-residue protein sequence, read N- to C-terminus: Insulin (52 aa).

3 disulfide bridges follow: Cys7-Cys38, Cys19-Cys51, and Cys37-Cys42.

This sequence belongs to the insulin family. Heterodimer of a B chain and an A chain linked by two disulfide bonds.

It is found in the secreted. Insulin decreases blood glucose concentration. It increases cell permeability to monosaccharides, amino acids and fatty acids. It accelerates glycolysis, the pentose phosphate cycle, and glycogen synthesis in liver. The polypeptide is Insulin (ins) (Atractosteus spatula (Alligator gar)).